The primary structure comprises 187 residues: Resolvase OPG149 (187 aa).

It belongs to the RuvC family. Poxviruses-type subfamily. The cofactor is Mg(2+).

Its function is as follows. Plays a role in DNA replication by cleaving viral DNA concatamers to yield unit-length viral genomes. The concatamer junctions contain inverted repeat sequences that can be extruded as cruciforms, yielding Holliday junctions that A22 protein cleaves. This chain is Resolvase OPG149 (OPG149), found in Variola virus (isolate Human/India/Ind3/1967) (VARV).